Consider the following 351-residue polypeptide: Spermidine/putrescine import ATP-binding protein PotA (351 aa).

Residues 6-236 (LELRNVTKEY…PENAWVANFI (231 aa)) enclose the ABC transporter domain. An ATP-binding site is contributed by 38–45 (GPSGCGKT).

Belongs to the ABC transporter superfamily. Spermidine/putrescine importer (TC 3.A.1.11.1) family. As to quaternary structure, the complex is composed of two ATP-binding proteins (PotA), two transmembrane proteins (PotB and PotC) and a solute-binding protein (PotD).

Its subcellular location is the cell membrane. It carries out the reaction ATP + H2O + polyamine-[polyamine-binding protein]Side 1 = ADP + phosphate + polyamineSide 2 + [polyamine-binding protein]Side 1.. In terms of biological role, part of the ABC transporter complex PotABCD involved in spermidine/putrescine import. Responsible for energy coupling to the transport system. The sequence is that of Spermidine/putrescine import ATP-binding protein PotA from Mycoplasma capricolum subsp. capricolum (strain California kid / ATCC 27343 / NCTC 10154).